The following is a 495-amino-acid chain: MCFNNIETGDEVETERQVFGSSEEDEFRVEDTARNTNNVQISQQQQQPLAHVVKWERYLPVRSLKVLLVENDDSTRHIVTALLKNCSYEVTAVPDVLEAWRILEDEKSCIDLVLTEVDMPVHSGTGLLSKIMSHKTLKNIPVIMMSSHDSMVLVFKCLSNGAVDFLVKPIRKNELKNLWQHVWRRCHSSSGSGSESGIHDKKSVKPESTQGSENDASISDEHRNESGSSGGLSNQDGGSDNGSGTQSSWTKRASDTKSTSPSNQFPDAPNKKGTYENGCAHVNRLKEAEDQKEQIGTGSQTGMSMSKKAEEPGDLEKNAKYSVQALERNNDDTLNRSSGNSQVESKAPSSNREDLQSLEQTLKKTREDRDYKVGDRSVLRHSNLSAFSKYNNGATSAKKAPEENVESCSPHDSPIAKLLGSSSSSDNPLKQQSSGSDRWAQREAALMKFRLKRKERCFEKKVRYHSRKKLAEQRPHVKGQFIRKRDDHKSGSEDN.

Positions 65–183 (KVLLVENDDS…ELKNLWQHVW (119 aa)) constitute a Response regulatory domain. Disordered stretches follow at residues 188–441 (SSSG…RWAQ) and 465–495 (HSRK…SEDN). Residues 206–217 (PESTQGSENDAS) show a composition bias toward polar residues. Residues 231-248 (GLSNQDGGSDNGSGTQSS) are compositionally biased toward low complexity. Over residues 256–265 (TKSTSPSNQF) the composition is skewed to polar residues. The span at 284–293 (RLKEAEDQKE) shows a compositional bias: basic and acidic residues. The span at 294-304 (QIGTGSQTGMS) shows a compositional bias: polar residues. The span at 307–319 (KKAEEPGDLEKNA) shows a compositional bias: basic and acidic residues. Residues 335-350 (NRSSGNSQVESKAPSS) show a composition bias toward polar residues. A coiled-coil region spans residues 349–372 (SSNREDLQSLEQTLKKTREDRDYK). Residues 351-378 (NREDLQSLEQTLKKTREDRDYKVGDRSV) show a composition bias toward basic and acidic residues. Composition is skewed to polar residues over residues 380–395 (RHSN…NGAT) and 420–436 (GSSS…SSGS). The region spanning 442–484 (REAALMKFRLKRKERCFEKKVRYHSRKKLAEQRPHVKGQFIRK) is the CCT domain. Residues 483–495 (RKRDDHKSGSEDN) show a composition bias toward basic and acidic residues.

The protein belongs to the ARR-like family. In terms of assembly, interacts with APRR1/TOC1 (via N-terminus). In terms of processing, phosphorylated by WNK1; during the night. Phosphorylation is required for optimal interaction with APRR1/TOC1.

It is found in the nucleus. In terms of biological role, controls photoperiodic flowering response. Component of the circadian clock. Controls the degradation of APRR1/TOC1 by the SCF(ZTL) complex. Expression of several members of the ARR-like family is controlled by circadian rhythm. The particular coordinated sequential expression of APRR9, APRR7, APRR5, APRR3 and APPR1 result to circadian waves that may be at the basis of the endogenous circadian clock. This Arabidopsis thaliana (Mouse-ear cress) protein is Two-component response regulator-like APRR3 (APRR3).